We begin with the raw amino-acid sequence, 206 residues long: Uridine kinase (206 aa).

An ATP-binding site is contributed by 11 to 18 (GGSASGKT).

The protein belongs to the uridine kinase family.

It localises to the cytoplasm. The catalysed reaction is uridine + ATP = UMP + ADP + H(+). It catalyses the reaction cytidine + ATP = CMP + ADP + H(+). It functions in the pathway pyrimidine metabolism; CTP biosynthesis via salvage pathway; CTP from cytidine: step 1/3. Its pathway is pyrimidine metabolism; UMP biosynthesis via salvage pathway; UMP from uridine: step 1/1. In Lactococcus lactis subsp. lactis (strain IL1403) (Streptococcus lactis), this protein is Uridine kinase.